The following is a 504-amino-acid chain: Sodium/proline symporter (504 aa).

13 consecutive transmembrane segments (helical) span residues 8-28 (LITF…AYYY), 50-70 (SAGA…AVYL), 73-93 (LVEG…WLLV), 127-147 (LVSA…GVVA), 163-183 (ALWY…FLAV), 189-209 (IQAT…LLSF), 240-260 (LGLL…HILA), 281-301 (WMVL…PYFF), 324-344 (LLFN…AVMS), 374-394 (ELVW…IWIA), 405-425 (VEFA…FSLF), 434-454 (AMAG…VVPA), and 461-481 (VYEM…ISLL).

It belongs to the sodium:solute symporter (SSF) (TC 2.A.21) family.

It localises to the cell inner membrane. The catalysed reaction is L-proline(in) + Na(+)(in) = L-proline(out) + Na(+)(out). Its function is as follows. Catalyzes the sodium-dependent uptake of extracellular L-proline. The sequence is that of Sodium/proline symporter (putP) from Haemophilus influenzae (strain ATCC 51907 / DSM 11121 / KW20 / Rd).